Here is a 160-residue protein sequence, read N- to C-terminus: Cytochrome c-type biogenesis protein CcmE (160 aa).

The Cytoplasmic segment spans residues 1 to 8 (MSAPRKTR). A helical; Signal-anchor for type II membrane protein transmembrane segment spans residues 9 to 29 (LYAILAVVCGAVLTIALMLYA). Over 30–160 (LSSNIDLFYT…PAAGPEGKRL (131 aa)) the chain is Periplasmic. Heme-binding residues include histidine 130 and tyrosine 134.

It belongs to the CcmE/CycJ family.

It localises to the cell inner membrane. Its function is as follows. Heme chaperone required for the biogenesis of c-type cytochromes. Transiently binds heme delivered by CcmC and transfers the heme to apo-cytochromes in a process facilitated by CcmF and CcmH. This is Cytochrome c-type biogenesis protein CcmE from Pectobacterium atrosepticum (strain SCRI 1043 / ATCC BAA-672) (Erwinia carotovora subsp. atroseptica).